A 103-amino-acid polypeptide reads, in one-letter code: Large ribosomal subunit protein bL21 (103 aa).

It belongs to the bacterial ribosomal protein bL21 family. Part of the 50S ribosomal subunit. Contacts protein L20.

Its function is as follows. This protein binds to 23S rRNA in the presence of protein L20. In Nautilia profundicola (strain ATCC BAA-1463 / DSM 18972 / AmH), this protein is Large ribosomal subunit protein bL21.